Consider the following 370-residue polypeptide: Sensor protein GtcS (370 aa).

Helical transmembrane passes span 2–22 and 40–60; these read ITAYILFTVTVGVTNSIVFYL and AWIVAWRLMEMVIFALSVYLY. The HAMP domain occupies 66-118; it reads KRITGPLEKITDAIQKMREGEFAQRLCFKADYELTLIQEHFNEMVAHLEKTEA. A Histidine kinase domain is found at 133 to 355; the sequence is DLSHDFKTPI…RLENDLPYRL (223 aa).

Its subcellular location is the cell membrane. It carries out the reaction ATP + protein L-histidine = ADP + protein N-phospho-L-histidine.. In terms of biological role, member of the two-component regulatory system GtcS/GtcR which may act in the control of the transcription of the grs operon which encodes the multienzymes involved in the biosynthesis of the peptide antibiotic gramicidin S. Probably activates GtcR by phosphorylation. This Aneurinibacillus migulanus (Bacillus migulanus) protein is Sensor protein GtcS (gtcS).